The sequence spans 457 residues: tRNA-2-methylthio-N(6)-dimethylallyladenosine synthase (457 aa).

Positions 3–120 (KKVYVKTFGC…LPQMIDARRA (118 aa)) constitute an MTTase N-terminal domain. Residues Cys12, Cys49, Cys83, Cys157, Cys161, and Cys164 each coordinate [4Fe-4S] cluster. The Radical SAM core domain maps to 143–377 (RVEGPSAFVS…QATIEENVAR (235 aa)). One can recognise a TRAM domain in the interval 380 to 447 (QSMVGKVERI…PHSLRGELVI (68 aa)).

The protein belongs to the methylthiotransferase family. MiaB subfamily. As to quaternary structure, monomer. It depends on [4Fe-4S] cluster as a cofactor.

It localises to the cytoplasm. The catalysed reaction is N(6)-dimethylallyladenosine(37) in tRNA + (sulfur carrier)-SH + AH2 + 2 S-adenosyl-L-methionine = 2-methylsulfanyl-N(6)-dimethylallyladenosine(37) in tRNA + (sulfur carrier)-H + 5'-deoxyadenosine + L-methionine + A + S-adenosyl-L-homocysteine + 2 H(+). Functionally, catalyzes the methylthiolation of N6-(dimethylallyl)adenosine (i(6)A), leading to the formation of 2-methylthio-N6-(dimethylallyl)adenosine (ms(2)i(6)A) at position 37 in tRNAs that read codons beginning with uridine. This chain is tRNA-2-methylthio-N(6)-dimethylallyladenosine synthase, found in Burkholderia cenocepacia (strain ATCC BAA-245 / DSM 16553 / LMG 16656 / NCTC 13227 / J2315 / CF5610) (Burkholderia cepacia (strain J2315)).